The sequence spans 273 residues: Pantothenate synthetase (273 aa).

Position 27–34 (27–34) interacts with ATP; that stretch reads MGALHDGH. His34 acts as the Proton donor in catalysis. Residue Gln58 participates in (R)-pantoate binding. A beta-alanine-binding site is contributed by Gln58. Position 144-147 (144-147) interacts with ATP; it reads GKKD. Gln150 provides a ligand contact to (R)-pantoate. ATP-binding positions include Val173 and 181–184; that span reads LSSR.

The protein belongs to the pantothenate synthetase family. As to quaternary structure, homodimer.

It is found in the cytoplasm. It carries out the reaction (R)-pantoate + beta-alanine + ATP = (R)-pantothenate + AMP + diphosphate + H(+). The protein operates within cofactor biosynthesis; (R)-pantothenate biosynthesis; (R)-pantothenate from (R)-pantoate and beta-alanine: step 1/1. In terms of biological role, catalyzes the condensation of pantoate with beta-alanine in an ATP-dependent reaction via a pantoyl-adenylate intermediate. This chain is Pantothenate synthetase, found in Campylobacter concisus (strain 13826).